The sequence spans 67 residues: Phycobilisome 7.8 kDa linker polypeptide, allophycocyanin-associated, core (67 aa).

Residues 1 to 56 (MRMFRITACLPSPSKIRTQRELQNTFFTKLVPYDAWFREQQRIQKLGGKIIKVELA) form the CpcD-like domain.

The protein belongs to the phycobilisome linker protein family.

The protein localises to the cellular thylakoid membrane. Functionally, rod linker protein, associated with allophycocyanin. Linker polypeptides determine the state of aggregation and the location of the disk-shaped phycobiliprotein units within the phycobilisome and modulate their spectroscopic properties in order to mediate a directed and optimal energy transfer. The chain is Phycobilisome 7.8 kDa linker polypeptide, allophycocyanin-associated, core (apcC) from Synechococcus sp. (strain ATCC 27144 / PCC 6301 / SAUG 1402/1) (Anacystis nidulans).